Consider the following 317-residue polypeptide: Melanocyte-stimulating hormone receptor (317 aa).

Over 1-37 (MPVLGSQRRLLGSLNCTPPATFSLTLAPNRTGPQCLE) the chain is Extracellular. Asn-29 is a glycosylation site (N-linked (GlcNAc...) asparagine). The helical transmembrane segment at 38–63 (VSIPDGLFLSLGLVSLVENVLVVAAI) threads the bilayer. The Cytoplasmic segment spans residues 64–72 (AKNRNLHSP). A helical transmembrane segment spans residues 73-93 (MYYFICCLAVSDLLVSVSNVL). Topologically, residues 94–118 (ETAVMLLLEAGALAARAAVVQQLDN) are extracellular. The chain crosses the membrane as a helical span at residues 119-140 (VIDVLICGSMVSSLCFLGAIAM). Over 141-163 (DRYISIFYALRYHSVVTLPRAWR) the chain is Cytoplasmic. The chain crosses the membrane as a helical span at residues 164-183 (IIAAIWVASILTSLLFITYY). The Extracellular portion of the chain corresponds to 184 to 191 (NHTVVLLC). Residues 192-211 (LVGFFIAMLALMAILYVHML) form a helical membrane-spanning segment. The Cytoplasmic portion of the chain corresponds to 212–240 (ARACQHARDIARLQKRQHPIHQGFGLKGA). The chain crosses the membrane as a helical span at residues 241 to 266 (ATLTILLGVFFLCWGPFFLHLSLIVL). At 267–279 (CPQHPTCGCIFKN) the chain is on the extracellular side. The helical transmembrane segment at 280-300 (FNLFLALIICNAIVDPLIYAF) threads the bilayer. Topologically, residues 301–317 (RSQELRKTLQEVLQCSW) are cytoplasmic. A lipid anchor (S-palmitoyl cysteine) is attached at Cys-315.

This sequence belongs to the G-protein coupled receptor 1 family. As to quaternary structure, interacts with MGRN1, but does not undergo MGRN1-mediated ubiquitination; this interaction competes with GNAS-binding and thus inhibits agonist-induced cAMP production. Interacts with OPN3; the interaction results in a decrease in MC1R-mediated cAMP signaling and ultimately a decrease in melanin production in melanocytes.

It localises to the cell membrane. Functionally, receptor for MSH (alpha, beta and gamma) and ACTH. The activity of this receptor is mediated by G proteins which activate adenylate cyclase. Mediates melanogenesis, the production of eumelanin (black/brown) and phaeomelanin (red/yellow), via regulation of cAMP signaling in melanocytes. The sequence is that of Melanocyte-stimulating hormone receptor (MC1R) from Alces alces alces (European moose).